A 109-amino-acid polypeptide reads, in one-letter code: Meiotically up-regulated gene 153 protein (109 aa).

The protein resides in the mitochondrion. In terms of biological role, has a role in meiosis. This chain is Meiotically up-regulated gene 153 protein (mug153), found in Schizosaccharomyces pombe (strain 972 / ATCC 24843) (Fission yeast).